Here is a 100-residue protein sequence, read N- to C-terminus: Noncompact myelin-associated protein (100 aa).

Over 1 to 28 (MTTATTLGDAVFSLNMTRGEDILYKSSG) the chain is Extracellular. Residues 29–49 (AIVAAIVVVVVIIVTLVLILL) traverse the membrane as a helical segment. The Cytoplasmic portion of the chain corresponds to 50–100 (KMYNRRMRTRRELEPKSPKPPVPPALDPNSNGSQQPAAVTSDPADVPVETR). Positions 58-100 (TRRELEPKSPKPPVPPALDPNSNGSQQPAAVTSDPADVPVETR) are disordered. Residues 77 to 87 (PNSNGSQQPAA) show a composition bias toward polar residues.

In terms of processing, glycosylated. Expressed in the peripheral nervous system Schwann cells (at protein level).

The protein resides in the cell membrane. In terms of biological role, plays a role in myelin formation. In Rattus norvegicus (Rat), this protein is Noncompact myelin-associated protein (Ncmap).